The following is a 555-amino-acid chain: Sulfite reductase [NADPH] hemoprotein beta-component (555 aa).

[4Fe-4S] cluster-binding residues include Cys430, Cys436, Cys475, and Cys479. Cys479 contacts siroheme.

It belongs to the nitrite and sulfite reductase 4Fe-4S domain family. In terms of assembly, alpha(8)-beta(8). The alpha component is a flavoprotein, the beta component is a hemoprotein. Siroheme is required as a cofactor. It depends on [4Fe-4S] cluster as a cofactor.

The enzyme catalyses hydrogen sulfide + 3 NADP(+) + 3 H2O = sulfite + 3 NADPH + 4 H(+). The protein operates within sulfur metabolism; hydrogen sulfide biosynthesis; hydrogen sulfide from sulfite (NADPH route): step 1/1. In terms of biological role, component of the sulfite reductase complex that catalyzes the 6-electron reduction of sulfite to sulfide. This is one of several activities required for the biosynthesis of L-cysteine from sulfate. The chain is Sulfite reductase [NADPH] hemoprotein beta-component from Leptospira biflexa serovar Patoc (strain Patoc 1 / Ames).